Reading from the N-terminus, the 211-residue chain is Endo-1,4-beta-xylanase A (211 aa).

The first 27 residues, 1-27 (MKVTAAFAGLLVTAFAAPVPEPVLVSR), serve as a signal peptide directing secretion. The GH11 domain occupies 28 to 210 (SAGINYVQNY…GAGSASVTIS (183 aa)). The active-site Nucleophile is the Glu106. A disulfide bridge links Cys119 with Cys138. Residue Glu197 is the Proton donor of the active site.

This sequence belongs to the glycosyl hydrolase 11 (cellulase G) family.

It localises to the secreted. The enzyme catalyses Endohydrolysis of (1-&gt;4)-beta-D-xylosidic linkages in xylans.. Its pathway is glycan degradation; xylan degradation. Its function is as follows. Endo-1,4-beta-xylanase involved in the hydrolysis of xylan, a major structural heterogeneous polysaccharide found in plant biomass representing the second most abundant polysaccharide in the biosphere, after cellulose. The polypeptide is Endo-1,4-beta-xylanase A (xynA) (Aspergillus niger).